The following is a 687-amino-acid chain: Glycine--tRNA ligase beta subunit (687 aa).

It belongs to the class-II aminoacyl-tRNA synthetase family. Tetramer of two alpha and two beta subunits.

The protein localises to the cytoplasm. The enzyme catalyses tRNA(Gly) + glycine + ATP = glycyl-tRNA(Gly) + AMP + diphosphate. The sequence is that of Glycine--tRNA ligase beta subunit from Neisseria gonorrhoeae (strain NCCP11945).